The chain runs to 563 residues: Ribulokinase (563 aa).

This sequence belongs to the ribulokinase family.

It carries out the reaction D-ribulose + ATP = D-ribulose 5-phosphate + ADP + H(+). The catalysed reaction is L-ribulose + ATP = L-ribulose 5-phosphate + ADP + H(+). It participates in carbohydrate degradation; L-arabinose degradation via L-ribulose; D-xylulose 5-phosphate from L-arabinose (bacterial route): step 2/3. The sequence is that of Ribulokinase from Halalkalibacterium halodurans (strain ATCC BAA-125 / DSM 18197 / FERM 7344 / JCM 9153 / C-125) (Bacillus halodurans).